Here is a 334-residue protein sequence, read N- to C-terminus: Beta-glucanase (334 aa).

An N-terminal signal peptide occupies residues 1 to 27; sequence MKNRVISLLMASLLLVLSVIVAPFYKA. The 221-residue stretch at 28-248 folds into the GH16 domain; the sequence is EAATVVNTPF…YVKYYPNGVP (221 aa). Glu-136 serves as the catalytic Nucleophile. Residue Glu-140 is the Proton donor of the active site. The interval 246 to 265 is disordered; sequence GVPQDNPTPTPTIAPSTPTN. Residues 267–334 enclose the Dockerin domain; it reads NLPLKGDVNG…RYLIRAIPSL (68 aa).

This sequence belongs to the glycosyl hydrolase 16 family.

It carries out the reaction Hydrolysis of (1-&gt;4)-beta-D-glucosidic linkages in beta-D-glucans containing (1-&gt;3)- and (1-&gt;4)-bonds.. The polypeptide is Beta-glucanase (licB) (Acetivibrio thermocellus (Hungateiclostridium thermocellum)).